The following is a 270-amino-acid chain: Hairy and enhancer of split-related protein helt (270 aa).

The interval 1–24 (MNARALYKRPPPVSSSQSEASGKR) is disordered. A bHLH domain is found at 59–114 (KTPVSHKVIEKRRRDRINRCLNELGKTVPMALAKQNSGKLEKAEILEMTVQYLRAL). One can recognise an Orange domain in the interval 136–171 (FHYGYHECMKNLVHYLTTVERMETKDTKYARILAFL).

Belongs to the HEY family.

It is found in the nucleus. Its function is as follows. Transcriptional repressor which binds preferentially to the canonical E box sequence 5'-CACGCG-3'. This Danio rerio (Zebrafish) protein is Hairy and enhancer of split-related protein helt (helt).